Consider the following 232-residue polypeptide: Multiple organellar RNA editing factor 6, mitochondrial (232 aa).

Residues 1-67 (MAKTLSRSTA…TIRTRMDRSG (67 aa)) constitute a mitochondrion transit peptide. The disordered stretch occupies residues 208 to 232 (TNQRGSDKPKYHDRIRNVRRRENMR). Over residues 212–232 (GSDKPKYHDRIRNVRRRENMR) the composition is skewed to basic and acidic residues.

It belongs to the MORF family. As to quaternary structure, heterodimers with MORF8/RIP1, MORF3/RIP3, MORF6/RIP6, MORF7/RIP7 and MORF9/RIP9.

It localises to the mitochondrion. Involved in organellar RNA editing. Required for the processing of few RNA editing sites in mitochondria. This chain is Multiple organellar RNA editing factor 6, mitochondrial, found in Arabidopsis thaliana (Mouse-ear cress).